The primary structure comprises 151 residues: Major curlin subunit (151 aa).

The N-terminal stretch at 1–20 (MKLLKVAAIAAIVFSGSALA) is a signal peptide. Residues 71 to 90 (TQHGGGNGADVGQGSDDSSI) are disordered.

This sequence belongs to the CsgA/CsgB family.

Its subcellular location is the fimbrium. Its function is as follows. Curlin is the structural subunit of the curli fimbriae. Curli are coiled surface structures that assemble preferentially at growth temperatures below 37 degrees Celsius. Curli can bind to fibronectin. This Escherichia coli (strain K12) protein is Major curlin subunit (csgA).